Reading from the N-terminus, the 560-residue chain is Involucrin (560 aa).

Residues 1 to 15 show a composition bias toward polar residues; sequence MSQQHTLPVTLSPAL. Disordered stretches follow at residues 1–131, 150–359, and 404–534; these read MSQQ…KLLD, EQLL…LVQQ, and GQLK…QSAL. Over residues 76-91 the composition is skewed to low complexity; the sequence is EQQQQEPQEQELQQQH. Composition is skewed to basic and acidic residues over residues 92 to 115 and 159 to 172; these read WEQH…KAQR and QEGH…REGQ. A compositionally biased stretch (low complexity) spans 189–211; the sequence is QKGQLELPEQQEGQLELPEQQEG. Basic and acidic residues-rich tracts occupy residues 212 to 231, 252 to 264, and 274 to 320; these read QLKH…HQEG, QLKH…KQPE, and KHLE…EHQE. Residues 321-334 show a composition bias toward low complexity; the sequence is GQLGLPEQQVQQLK. Basic and acidic residues-rich tracts occupy residues 335–353, 404–420, 454–463, 476–486, and 494–510; these read QLEK…EGQL, GQLK…KHLE, QLKHLEKQEA, KHLEQQEKQLE, and QLKH…DLEQ.

The protein belongs to the involucrin family. Directly or indirectly cross-linked to cornifelin (CNFN). Substrate of transglutaminase. Specific glutamines or lysines are cross-linked to keratins, desmoplakin and to inter involucrin molecules. In terms of tissue distribution, keratinocytes of epidermis and other stratified squamous epithelia.

The protein localises to the cytoplasm. Its function is as follows. Part of the insoluble cornified cell envelope (CE) of stratified squamous epithelia. The polypeptide is Involucrin (IVL) (Pan paniscus (Pygmy chimpanzee)).